Reading from the N-terminus, the 273-residue chain is Large ribosomal subunit protein uL2 (273 aa).

Positions 221 to 263 (RGTAMNPVDHPHGGGEGRNFGKHPVTPWGVQTKGKKTRHNKRT) are disordered. A compositionally biased stretch (basic residues) spans 253–263 (KGKKTRHNKRT).

The protein belongs to the universal ribosomal protein uL2 family. As to quaternary structure, part of the 50S ribosomal subunit. Forms a bridge to the 30S subunit in the 70S ribosome.

Its function is as follows. One of the primary rRNA binding proteins. Required for association of the 30S and 50S subunits to form the 70S ribosome, for tRNA binding and peptide bond formation. It has been suggested to have peptidyltransferase activity; this is somewhat controversial. Makes several contacts with the 16S rRNA in the 70S ribosome. The protein is Large ribosomal subunit protein uL2 of Histophilus somni (strain 129Pt) (Haemophilus somnus).